A 347-amino-acid chain; its full sequence is NADH-ubiquinone oxidoreductase chain 2 (347 aa).

10 helical membrane-spanning segments follow: residues 4 to 21 (LILSMIMATIILGTLIVM), 26 to 45 (WLMVWIGFEMNMLAILPVLM), 59 to 79 (YFLTQATASMLLMLAITINLI), 96 to 116 (IIMTLALAMKLGLSPFHFWVP), 122 to 142 (IQLSSGLILLTWQKLAPMSIL), 148 to 168 (AINMDLLLSMSLMSVAIGGWG), 201 to 221 (ALLNLIIYILLTTTTFMTFML), 242 to 262 (TTILILMLSLGGLPPLSGFLP), 274 to 294 (DSIITPTIMAITALLNLYFYM), and 326 to 346 (LPPLIVLSTLILPMSPMLMLL).

This sequence belongs to the complex I subunit 2 family. As to quaternary structure, core subunit of respiratory chain NADH dehydrogenase (Complex I) which is composed of 45 different subunits. Interacts with TMEM242.

Its subcellular location is the mitochondrion inner membrane. The enzyme catalyses a ubiquinone + NADH + 5 H(+)(in) = a ubiquinol + NAD(+) + 4 H(+)(out). Functionally, core subunit of the mitochondrial membrane respiratory chain NADH dehydrogenase (Complex I) which catalyzes electron transfer from NADH through the respiratory chain, using ubiquinone as an electron acceptor. Essential for the catalytic activity and assembly of complex I. The chain is NADH-ubiquinone oxidoreductase chain 2 from Syconycteris australis (Southern blossom bat).